Here is a 286-residue protein sequence, read N- to C-terminus: MSWLEKIIPSISRTETKRSNKVPEGLWEKCVKCDAVLYKPELEKNLDVCPKCDHHMRIGARSRLNIFLDPQNRQELATDVEPVDRLKFKDIKKYKDRLSSAQKDTGEKDALIAMRGELKGMPVVAVAFEFAFHGGSMGYVVGERFTRAATVALNENIPLVCFSATGGARMQEALISLMQMAKTSAVIERLKMQGTPYVSVMTDPVYGGVSASLALLGDINVAEPGARAGFAGPSIIEQTIRQKLPKGFQRAEFLLEHGAIDMIIHRGEMRDKLASLLAKFTRRAAV.

The region spanning 26-286 (LWEKCVKCDA…LAKFTRRAAV (261 aa)) is the CoA carboxyltransferase N-terminal domain. Residues Cys30, Cys33, Cys49, and Cys52 each contribute to the Zn(2+) site. The segment at 30–52 (CVKCDAVLYKPELEKNLDVCPKC) adopts a C4-type zinc-finger fold.

The protein belongs to the AccD/PCCB family. Acetyl-CoA carboxylase is a heterohexamer composed of biotin carboxyl carrier protein (AccB), biotin carboxylase (AccC) and two subunits each of ACCase subunit alpha (AccA) and ACCase subunit beta (AccD). The cofactor is Zn(2+).

The protein localises to the cytoplasm. It carries out the reaction N(6)-carboxybiotinyl-L-lysyl-[protein] + acetyl-CoA = N(6)-biotinyl-L-lysyl-[protein] + malonyl-CoA. Its pathway is lipid metabolism; malonyl-CoA biosynthesis; malonyl-CoA from acetyl-CoA: step 1/1. In terms of biological role, component of the acetyl coenzyme A carboxylase (ACC) complex. Biotin carboxylase (BC) catalyzes the carboxylation of biotin on its carrier protein (BCCP) and then the CO(2) group is transferred by the transcarboxylase to acetyl-CoA to form malonyl-CoA. This Cellvibrio japonicus (strain Ueda107) (Pseudomonas fluorescens subsp. cellulosa) protein is Acetyl-coenzyme A carboxylase carboxyl transferase subunit beta.